We begin with the raw amino-acid sequence, 80 residues long: CDC42 small effector protein 1 (80 aa).

2 S-palmitoyl cysteine lipidation sites follow: Cys10 and Cys11. The region spanning 30–43 (IGEPMNFVHLTHIG) is the CRIB domain. Residues 48–80 (GAGDGLAMTGAVQEQMRSKGNHRDRPWSNSRAL) form a disordered region.

It belongs to the CDC42SE/SPEC family. Interacts with CDC42 (in GTP-bound form). Interacts weakly with RAC1 and not at all with RHOA.

Its subcellular location is the cytoplasm. The protein localises to the cytoskeleton. The protein resides in the cell membrane. Its function is as follows. Probably involved in the organization of the actin cytoskeleton by acting downstream of CDC42, inducing actin filament assembly. Alters CDC42-induced cell shape changes. In activated T-cells, may play a role in CDC42-mediated F-actin accumulation at the immunological synapse. May play a role in early contractile events in phagocytosis in macrophages. This Mus musculus (Mouse) protein is CDC42 small effector protein 1 (Cdc42se1).